The primary structure comprises 444 residues: tRNA-2-methylthio-N(6)-dimethylallyladenosine synthase (444 aa).

The 115-residue stretch at 3–117 folds into the MTTase N-terminal domain; that stretch reads RGLYIESYGC…LPELIMKVKR (115 aa). 6 residues coordinate [4Fe-4S] cluster: Cys12, Cys48, Cys80, Cys155, Cys159, and Cys162. In terms of domain architecture, Radical SAM core spans 141-374; that stretch reads ANGGVSAYVS…LLTKQQLQFN (234 aa). The region spanning 375-441 is the TRAM domain; the sequence is KSMEGRVMDV…QNSLEGTVLS (67 aa).

The protein belongs to the methylthiotransferase family. MiaB subfamily. In terms of assembly, monomer. Requires [4Fe-4S] cluster as cofactor.

Its subcellular location is the cytoplasm. It catalyses the reaction N(6)-dimethylallyladenosine(37) in tRNA + (sulfur carrier)-SH + AH2 + 2 S-adenosyl-L-methionine = 2-methylsulfanyl-N(6)-dimethylallyladenosine(37) in tRNA + (sulfur carrier)-H + 5'-deoxyadenosine + L-methionine + A + S-adenosyl-L-homocysteine + 2 H(+). Functionally, catalyzes the methylthiolation of N6-(dimethylallyl)adenosine (i(6)A), leading to the formation of 2-methylthio-N6-(dimethylallyl)adenosine (ms(2)i(6)A) at position 37 in tRNAs that read codons beginning with uridine. The polypeptide is tRNA-2-methylthio-N(6)-dimethylallyladenosine synthase (Anaplasma phagocytophilum (strain HZ)).